The sequence spans 201 residues: FMN reductase (NADH) RutF 1 (201 aa).

A compositionally biased stretch (low complexity) spans 167-195; the sequence is PRAPRSGSAPAEPARAARAVGARPAEGPA. The disordered stretch occupies residues 167–201; the sequence is PRAPRSGSAPAEPARAARAVGARPAEGPALALRSA.

This sequence belongs to the non-flavoprotein flavin reductase family. RutF subfamily.

It catalyses the reaction FMNH2 + NAD(+) = FMN + NADH + 2 H(+). Functionally, catalyzes the reduction of FMN to FMNH2 which is used to reduce pyrimidine by RutA via the Rut pathway. The protein is FMN reductase (NADH) RutF 1 of Methylorubrum extorquens (strain CM4 / NCIMB 13688) (Methylobacterium extorquens).